Here is a 35-residue protein sequence, read N- to C-terminus: Photosystem II reaction center protein M (35 aa).

The chain crosses the membrane as a helical span at residues 5–25 (ILAFIATALFILVPTAFLLII).

The protein belongs to the PsbM family. In terms of assembly, PSII is composed of 1 copy each of membrane proteins PsbA, PsbB, PsbC, PsbD, PsbE, PsbF, PsbH, PsbI, PsbJ, PsbK, PsbL, PsbM, PsbT, PsbX, PsbY, PsbZ, Psb30/Ycf12, at least 3 peripheral proteins of the oxygen-evolving complex and a large number of cofactors. It forms dimeric complexes.

It localises to the plastid. Its subcellular location is the chloroplast thylakoid membrane. In terms of biological role, one of the components of the core complex of photosystem II (PSII). PSII is a light-driven water:plastoquinone oxidoreductase that uses light energy to abstract electrons from H(2)O, generating O(2) and a proton gradient subsequently used for ATP formation. It consists of a core antenna complex that captures photons, and an electron transfer chain that converts photonic excitation into a charge separation. This subunit is found at the monomer-monomer interface. This is Photosystem II reaction center protein M from Amborella trichopoda.